We begin with the raw amino-acid sequence, 313 residues long: 3'-5' exoribonuclease YhaM (313 aa).

The HD domain occupies 163–279 (HVVSMLRLAK…LHQIDLMDAS (117 aa)).

Belongs to the YhaM family.

In terms of biological role, shows a 3'-5' exoribonuclease activity. This Listeria welshimeri serovar 6b (strain ATCC 35897 / DSM 20650 / CCUG 15529 / CIP 8149 / NCTC 11857 / SLCC 5334 / V8) protein is 3'-5' exoribonuclease YhaM.